Here is a 102-residue protein sequence, read N- to C-terminus: NADH-quinone oxidoreductase subunit K (102 aa).

The next 3 helical transmembrane spans lie at 4 to 24 (IPME…LVGL), 30 to 50 (MLFV…AFIV), and 62 to 82 (VMFL…LALL).

This sequence belongs to the complex I subunit 4L family. NDH-1 is composed of 14 different subunits. Subunits NuoA, H, J, K, L, M, N constitute the membrane sector of the complex.

Its subcellular location is the cell inner membrane. It carries out the reaction a quinone + NADH + 5 H(+)(in) = a quinol + NAD(+) + 4 H(+)(out). In terms of biological role, NDH-1 shuttles electrons from NADH, via FMN and iron-sulfur (Fe-S) centers, to quinones in the respiratory chain. The immediate electron acceptor for the enzyme in this species is believed to be ubiquinone. Couples the redox reaction to proton translocation (for every two electrons transferred, four hydrogen ions are translocated across the cytoplasmic membrane), and thus conserves the redox energy in a proton gradient. The protein is NADH-quinone oxidoreductase subunit K of Chromohalobacter salexigens (strain ATCC BAA-138 / DSM 3043 / CIP 106854 / NCIMB 13768 / 1H11).